A 374-amino-acid chain; its full sequence is MKAIHFGAGNIGRGFIGALLSKANYEVVFVDVNAQVIDRLNEQRSYTVLTADEDNEENVIHNVRGLNSRTQMEQVLAEIATADLVTTAVGPSVLPHLAHPIGQGLLQRNGAPIQVIACENAIGASSMLQEYTKASLSEEEWSKVDRVTGFPNATVDRIVPAQDHADPLTVSVEPFYEWVIETKSMKGEPPTIDGVTYVEDLTPYIERKLFTVNTGHAMVAYLGFQKGLMTIKEAISDQTIAEKTRQALAETKGLLVHKYNFSPEAHDEYIEKIFKRYNNPYLSDRVERVGRNPIRKLGYNERLVKPARQLLDLGHQPTALLAGIQAAFAFFVEDDQESMELQEKRQVQGLEQTVVEVTGLPAVHPLVQMIVGNN.

3–14 (AIHFGAGNIGRG) contributes to the NAD(+) binding site.

Belongs to the mannitol dehydrogenase family.

It catalyses the reaction D-mannitol 1-phosphate + NAD(+) = beta-D-fructose 6-phosphate + NADH + H(+). This Halalkalibacterium halodurans (strain ATCC BAA-125 / DSM 18197 / FERM 7344 / JCM 9153 / C-125) (Bacillus halodurans) protein is Mannitol-1-phosphate 5-dehydrogenase.